A 525-amino-acid polypeptide reads, in one-letter code: Cytochrome P450 4V2 (525 aa).

The helical transmembrane segment at 14-34 threads the bilayer; it reads LLWGAASAVSLAGATILISIF. Positions 329 and 467 each coordinate heme.

Belongs to the cytochrome P450 family. Heme is required as a cofactor.

It is found in the endoplasmic reticulum membrane. It catalyses the reaction dodecanoate + reduced [NADPH--hemoprotein reductase] + O2 = 12-hydroxydodecanoate + oxidized [NADPH--hemoprotein reductase] + H2O + H(+). The enzyme catalyses tetradecanoate + reduced [NADPH--hemoprotein reductase] + O2 = 14-hydroxytetradecanoate + oxidized [NADPH--hemoprotein reductase] + H2O + H(+). It carries out the reaction hexadecanoate + reduced [NADPH--hemoprotein reductase] + O2 = 16-hydroxyhexadecanoate + oxidized [NADPH--hemoprotein reductase] + H2O + H(+). The catalysed reaction is (5Z,8Z,11Z,14Z,17Z)-eicosapentaenoate + reduced [NADPH--hemoprotein reductase] + O2 = 20-hydroxy-(5Z,8Z,11Z,14Z,17Z)-eicosapentaenoate + oxidized [NADPH--hemoprotein reductase] + H2O + H(+). It catalyses the reaction (4Z,7Z,10Z,13Z,16Z,19Z)-docosahexaenoate + reduced [NADPH--hemoprotein reductase] + O2 = 22-hydroxy-(4Z,7Z,10Z,13Z,16Z,19Z)-docosahexaenoate + oxidized [NADPH--hemoprotein reductase] + H2O + H(+). It participates in lipid metabolism; fatty acid metabolism. Its activity is regulated as follows. Inhibited by N-hydroxy-N'-(4-n-butyl-2-methylphenyl formamidine)(HET0016) with an IC(50) of 38 nM. In terms of biological role, a cytochrome P450 monooxygenase involved in fatty acid metabolism in the eye. Catalyzes the omega-hydroxylation of polyunsaturated fatty acids (PUFAs) docosahexaenoate (DHA) and its precursor eicosapentaenoate (EPA), and may contribute to the homeostasis of these retinal PUFAs. Omega hydroxylates saturated fatty acids such as laurate, myristate and palmitate, the catalytic efficiency decreasing in the following order: myristate &gt; laurate &gt; palmitate (C14&gt;C12&gt;C16). Mechanistically, uses molecular oxygen inserting one oxygen atom into a substrate, and reducing the second into a water molecule, with two electrons provided by NADPH via cytochrome P450 reductase (CPR; NADPH-ferrihemoprotein reductase). The sequence is that of Cytochrome P450 4V2 (Cyp4v2) from Mus musculus (Mouse).